Consider the following 88-residue polypeptide: Small ribosomal subunit protein bS16 (88 aa).

The protein belongs to the bacterial ribosomal protein bS16 family.

This is Small ribosomal subunit protein bS16 from Thermus aquaticus.